The following is a 1001-amino-acid chain: E3 ubiquitin-protein ligase BRE1B (1001 aa).

Positions 1–31 (MSGLGNKRAAGDGGSGPPEKKLSREEKTTTT) are disordered. A compositionally biased stretch (basic and acidic residues) spans 18 to 28 (PEKKLSREEKT). The residue at position 20 (Lys20) is an N6-acetyllysine. Ser42 is subject to Phosphoserine. Positions 45–91 (EEIDLKVLQFKNKKLAERLEQRQACEDELRERIEKLEKRQATDDATL) form a coiled coil. The disordered stretch occupies residues 116 to 149 (GELSSAPEAPGTQEGPTCDGTPLPEPGTSELREP). Coiled coils occupy residues 228-377 (ARTR…LRSL) and 437-523 (LQKK…AQTS). N6-acetyllysine is present on residues Lys355 and Lys517. The segment at 516–646 (GKLRAQTSGS…EKAKVEEAKR (131 aa)) is disordered. The segment covering 520-531 (AQTSGSTHSTPN) has biased composition (polar residues). Ser528 carries the post-translational modification Phosphoserine. Residues Lys578 and Lys579 each participate in a glycyl lysine isopeptide (Lys-Gly) (interchain with G-Cter in SUMO2) cross-link. Phosphoserine is present on Ser585. Basic and acidic residues-rich tracts occupy residues 602–619 (RGREPEARPKRELREREG) and 633–646 (RADREKAKVEEAKR). Residues 627–946 (VASALSRADR…EEIKEYKARL (320 aa)) adopt a coiled-coil conformation. Residues 948–987 (CPCCNTRKKDAVLTKCFHVFCFECVRGRYEARQRKCPKCN) form an RING-type zinc finger.

The protein belongs to the BRE1 family. As to quaternary structure, component of the RNF20/40 complex (also known as BRE1 complex) probably composed of 2 copies of RNF20/BRE1A and 2 copies of RNF40/BRE1B. Interacts with UBE2E1/UBCH6. Interacts with RB1 and WAC.

It localises to the nucleus. It catalyses the reaction S-ubiquitinyl-[E2 ubiquitin-conjugating enzyme]-L-cysteine + [acceptor protein]-L-lysine = [E2 ubiquitin-conjugating enzyme]-L-cysteine + N(6)-ubiquitinyl-[acceptor protein]-L-lysine.. Its pathway is protein modification; protein ubiquitination. In terms of biological role, component of the RNF20/40 E3 ubiquitin-protein ligase complex that mediates monoubiquitination of 'Lys-120' of histone H2B (H2BK120ub1). H2BK120ub1 gives a specific tag for epigenetic transcriptional activation and is also prerequisite for histone H3 'Lys-4' and 'Lys-79' methylation (H3K4me and H3K79me, respectively). It thereby plays a central role in histone code and gene regulation. The RNF20/40 complex forms a H2B ubiquitin ligase complex in cooperation with the E2 enzyme UBE2A or UBE2B; reports about the cooperation with UBE2E1/UBCH are contradictory. Required for transcriptional activation of Hox genes. The chain is E3 ubiquitin-protein ligase BRE1B (RNF40) from Macaca fascicularis (Crab-eating macaque).